The chain runs to 110 residues: Cell division protein FtsB (110 aa).

Residues 1-3 are Cytoplasmic-facing; the sequence is MRL. Residues 4 to 21 form a helical membrane-spanning segment; that stretch reads IILCLAALVLLIQFPLWL. The Periplasmic segment spans residues 22-110; the sequence is GKGGWLRVWD…PPKIEPKEKR (89 aa). The stretch at 31-64 forms a coiled coil; that stretch reads DLDQQVIAAQKKNDELRARNAKLNSEVQDLKEGT.

Belongs to the FtsB family. Part of a complex composed of FtsB, FtsL and FtsQ.

It is found in the cell inner membrane. Functionally, essential cell division protein. May link together the upstream cell division proteins, which are predominantly cytoplasmic, with the downstream cell division proteins, which are predominantly periplasmic. The sequence is that of Cell division protein FtsB from Herminiimonas arsenicoxydans.